Consider the following 388-residue polypeptide: Succinate--CoA ligase [ADP-forming] subunit beta (388 aa).

Residues 9–244 (KAIFRSMGVA…LEEEDPKEIE (236 aa)) enclose the ATP-grasp domain. Residues K46, 53–55 (GRG), E99, C102, and E107 each bind ATP. Residues N199 and D213 each contribute to the Mg(2+) site. Residues N264 and 321–323 (GIM) each bind substrate.

Belongs to the succinate/malate CoA ligase beta subunit family. Heterotetramer of two alpha and two beta subunits. Mg(2+) is required as a cofactor.

The enzyme catalyses succinate + ATP + CoA = succinyl-CoA + ADP + phosphate. It catalyses the reaction GTP + succinate + CoA = succinyl-CoA + GDP + phosphate. Its pathway is carbohydrate metabolism; tricarboxylic acid cycle; succinate from succinyl-CoA (ligase route): step 1/1. Succinyl-CoA synthetase functions in the citric acid cycle (TCA), coupling the hydrolysis of succinyl-CoA to the synthesis of either ATP or GTP and thus represents the only step of substrate-level phosphorylation in the TCA. The beta subunit provides nucleotide specificity of the enzyme and binds the substrate succinate, while the binding sites for coenzyme A and phosphate are found in the alpha subunit. The polypeptide is Succinate--CoA ligase [ADP-forming] subunit beta (Staphylococcus saprophyticus subsp. saprophyticus (strain ATCC 15305 / DSM 20229 / NCIMB 8711 / NCTC 7292 / S-41)).